A 97-amino-acid polypeptide reads, in one-letter code: Putative membrane protein insertion efficiency factor (97 aa).

This sequence belongs to the UPF0161 family.

The protein localises to the cell inner membrane. In terms of biological role, could be involved in insertion of integral membrane proteins into the membrane. The polypeptide is Putative membrane protein insertion efficiency factor (Chlamydia muridarum (strain MoPn / Nigg)).